A 283-amino-acid polypeptide reads, in one-letter code: MRTQWPSPAKLNLFLYITGQRADGYHTLQTLFQFLDYGDTISIELRDDGDIRLLTPVEGVEHEDNLIVRAARLLMKTAADSGRLSTGSGANISIDKRLPMGGGLGGGSSNAATVLVALNHLWQCGLSMDELAEMGLTLGADVPVFVRGHAAFAEGVGEILTPVDPPEKWYLVAHPGVSIPTPVIFKDPELPRNTPKRSIETLLKCEFSNDCEVIARKRFREVDAVLSWLLEYAPSRLTGTGACVFAEFDTESEARQVLEQAPEWLNGFVAKGVNLSPLHRAML.

The active site involves lysine 10. Position 99–109 (99–109 (PMGGGLGGGSS)) interacts with ATP. Aspartate 141 is an active-site residue.

This sequence belongs to the GHMP kinase family. IspE subfamily. In terms of assembly, homodimer.

The enzyme catalyses 4-CDP-2-C-methyl-D-erythritol + ATP = 4-CDP-2-C-methyl-D-erythritol 2-phosphate + ADP + H(+). Its pathway is isoprenoid biosynthesis; isopentenyl diphosphate biosynthesis via DXP pathway; isopentenyl diphosphate from 1-deoxy-D-xylulose 5-phosphate: step 3/6. Its function is as follows. Catalyzes the phosphorylation of the position 2 hydroxy group of 4-diphosphocytidyl-2C-methyl-D-erythritol. The polypeptide is 4-diphosphocytidyl-2-C-methyl-D-erythritol kinase (Escherichia coli O81 (strain ED1a)).